The chain runs to 256 residues: 2-C-methyl-D-erythritol 4-phosphate cytidylyltransferase (256 aa).

Belongs to the IspD/TarI cytidylyltransferase family. IspD subfamily.

It catalyses the reaction 2-C-methyl-D-erythritol 4-phosphate + CTP + H(+) = 4-CDP-2-C-methyl-D-erythritol + diphosphate. It functions in the pathway isoprenoid biosynthesis; isopentenyl diphosphate biosynthesis via DXP pathway; isopentenyl diphosphate from 1-deoxy-D-xylulose 5-phosphate: step 2/6. In terms of biological role, catalyzes the formation of 4-diphosphocytidyl-2-C-methyl-D-erythritol from CTP and 2-C-methyl-D-erythritol 4-phosphate (MEP). The chain is 2-C-methyl-D-erythritol 4-phosphate cytidylyltransferase from Corynebacterium glutamicum (strain R).